We begin with the raw amino-acid sequence, 435 residues long: GTPase Obg (435 aa).

The Obg domain occupies Met1 to Ile159. The OBG-type G domain maps to Ala160–Phe329. GTP is bound by residues Gly166–Ser173, Phe191–Asn195, Asp212–Gly215, Asn282–Asp285, and Ser310–Leu312. Positions 173 and 193 each coordinate Mg(2+). The OCT domain maps to Thr355–Glu435.

Belongs to the TRAFAC class OBG-HflX-like GTPase superfamily. OBG GTPase family. As to quaternary structure, monomer. The cofactor is Mg(2+).

The protein localises to the cytoplasm. Functionally, an essential GTPase which binds GTP, GDP and possibly (p)ppGpp with moderate affinity, with high nucleotide exchange rates and a fairly low GTP hydrolysis rate. Plays a role in control of the cell cycle, stress response, ribosome biogenesis and in those bacteria that undergo differentiation, in morphogenesis control. The sequence is that of GTPase Obg from Ureaplasma urealyticum serovar 10 (strain ATCC 33699 / Western).